A 334-amino-acid chain; its full sequence is Holliday junction branch migration complex subunit RuvB (334 aa).

The segment at 4–186 (ADRLIAPISN…FGIVQRLEYY (183 aa)) is large ATPase domain (RuvB-L). ATP is bound by residues isoleucine 25, arginine 26, glycine 67, lysine 70, threonine 71, threonine 72, 133 to 135 (EDY), arginine 176, tyrosine 186, and arginine 223. Position 71 (threonine 71) interacts with Mg(2+). Residues 187-257 (KVADLQHIVQ…TADRALNMLD (71 aa)) are small ATPAse domain (RuvB-S). Residues 260 to 334 (HQGFDYMDRK…RAYLHFGIEK (75 aa)) are head domain (RuvB-H). The DNA site is built by arginine 315 and arginine 320.

Belongs to the RuvB family. As to quaternary structure, homohexamer. Forms an RuvA(8)-RuvB(12)-Holliday junction (HJ) complex. HJ DNA is sandwiched between 2 RuvA tetramers; dsDNA enters through RuvA and exits via RuvB. An RuvB hexamer assembles on each DNA strand where it exits the tetramer. Each RuvB hexamer is contacted by two RuvA subunits (via domain III) on 2 adjacent RuvB subunits; this complex drives branch migration. In the full resolvosome a probable DNA-RuvA(4)-RuvB(12)-RuvC(2) complex forms which resolves the HJ.

It localises to the cytoplasm. The catalysed reaction is ATP + H2O = ADP + phosphate + H(+). Its function is as follows. The RuvA-RuvB-RuvC complex processes Holliday junction (HJ) DNA during genetic recombination and DNA repair, while the RuvA-RuvB complex plays an important role in the rescue of blocked DNA replication forks via replication fork reversal (RFR). RuvA specifically binds to HJ cruciform DNA, conferring on it an open structure. The RuvB hexamer acts as an ATP-dependent pump, pulling dsDNA into and through the RuvAB complex. RuvB forms 2 homohexamers on either side of HJ DNA bound by 1 or 2 RuvA tetramers; 4 subunits per hexamer contact DNA at a time. Coordinated motions by a converter formed by DNA-disengaged RuvB subunits stimulates ATP hydrolysis and nucleotide exchange. Immobilization of the converter enables RuvB to convert the ATP-contained energy into a lever motion, pulling 2 nucleotides of DNA out of the RuvA tetramer per ATP hydrolyzed, thus driving DNA branch migration. The RuvB motors rotate together with the DNA substrate, which together with the progressing nucleotide cycle form the mechanistic basis for DNA recombination by continuous HJ branch migration. Branch migration allows RuvC to scan DNA until it finds its consensus sequence, where it cleaves and resolves cruciform DNA. The protein is Holliday junction branch migration complex subunit RuvB of Vibrio cholerae serotype O1 (strain ATCC 39315 / El Tor Inaba N16961).